A 212-amino-acid polypeptide reads, in one-letter code: U8 snoRNA-decapping enzyme (212 aa).

A disordered region spans residues 1–23; sequence MAESRSPDRGAKEDKPRPRNISR. Substrate-binding residues include H37, R63, and F70. One can recognise a Nudix hydrolase domain in the interval 39 to 187; sequence LLHAPSQAKL…IGNSKSQLLY (149 aa). Mn(2+) is bound by residues G72, E89, E93, and E150. The short motif at 74–95 is the Nudix box element; the sequence is FVDTRDISLEEGLKRELEEELG. Substrate is bound by residues N180 and Q184.

It belongs to the Nudix hydrolase family. NUDT16 subfamily. As to quaternary structure, homodimer. It depends on Mg(2+) as a cofactor. Requires Mn(2+) as cofactor. Co(2+) serves as cofactor. In terms of tissue distribution, detected in ovary, and at very low levels in epithelial cells (at protein level).

The protein localises to the nucleus. Its subcellular location is the nucleolus. It is found in the nucleoplasm. The protein resides in the cytoplasm. The enzyme catalyses a 5'-end (N(7)-methyl 5'-triphosphoguanosine)-ribonucleoside in mRNA + H2O = N(7)-methyl-GDP + a 5'-end phospho-ribonucleoside in mRNA + 2 H(+). The catalysed reaction is IDP + H2O = IMP + phosphate + H(+). It catalyses the reaction dIDP + H2O = dIMP + phosphate + H(+). It carries out the reaction a 5'-end NAD(+)-phospho-ribonucleoside in mRNA + H2O = a 5'-end phospho-ribonucleoside in mRNA + NAD(+) + H(+). The enzyme catalyses a 5'-end FAD-phospho-ribonucleoside in mRNA + H2O = a 5'-end phospho-adenosine-phospho-ribonucleoside in mRNA + FMN + 2 H(+). The catalysed reaction is a 5'-end CoA-ribonucleoside in mRNA + H2O = a 5'-end phospho-adenosine-phospho-ribonucleoside in mRNA + (R)-4'-phosphopantetheine + 2 H(+). Functionally, RNA-binding and decapping enzyme that catalyzes the cleavage of the cap structure of snoRNAs and mRNAs in a metal-dependent manner. Part of the U8 snoRNP complex that is required for the accumulation of mature 5.8S and 28S rRNA. Has diphosphatase activity and removes m7G and/or m227G caps from U8 snoRNA and leaves a 5'monophosphate on the RNA. Also catalyzes the cleavage of the cap structure on mRNAs. Does not hydrolyze cap analog structures like 7-methylguanosine nucleoside triphosphate (m7GpppG). Also hydrolysis m7G- and m227G U3-capped RNAs but with less efficiencies. Has broad substrate specificity with manganese or cobalt as cofactor and can act on various RNA species. Binds to the U8 snoRNA; metal is not required for RNA-binding. May play a role in the regulation of snoRNAs and mRNAs degradation. Also acts as a phosphatase; hydrolyzes the non-canonical purine nucleotides inosine diphosphate (IDP) and deoxyinosine diphosphate (dITP) as well as guanosine diphosphate (GDP), deoxyguanosine diphosphate (dGDP), xanthine diphosphate (XDP), inosine triphosphate (ITP) and deoxyinosine triphosphate (ITP) to their respective monophosphate derivatives and does not distinguish between the deoxy- and ribose forms. The order of activity with different substrates is IDP &gt; dIDP &gt;&gt; GDP = dGDP &gt; XDP = ITP = dITP. Binds strongly to GTP, ITP and XTP. Participates in the hydrolysis of dIDP/IDP and probably excludes non-canonical purines from RNA and DNA precursor pools, thus preventing their incorporation into RNA and DNA and avoiding chromosomal lesions. Exhibits decapping activity towards NAD-capped RNAs and FAD-capped RNAs. Exhibits decapping activity towards dpCoA-capped RNAs in vitro. The chain is U8 snoRNA-decapping enzyme (nudt16) from Xenopus laevis (African clawed frog).